The primary structure comprises 292 residues: Glycine--tRNA ligase alpha subunit (292 aa).

Belongs to the class-II aminoacyl-tRNA synthetase family. In terms of assembly, tetramer of two alpha and two beta subunits.

Its subcellular location is the cytoplasm. The enzyme catalyses tRNA(Gly) + glycine + ATP = glycyl-tRNA(Gly) + AMP + diphosphate. The protein is Glycine--tRNA ligase alpha subunit of Synechococcus elongatus (strain ATCC 33912 / PCC 7942 / FACHB-805) (Anacystis nidulans R2).